Reading from the N-terminus, the 323-residue chain is tRNA dimethylallyltransferase (323 aa).

Position 12–19 (12–19 (GPTAAGKT)) interacts with ATP. 14 to 19 (TAAGKT) serves as a coordination point for substrate. Interaction with substrate tRNA stretches follow at residues 37 to 40 (DSAL) and 161 to 165 (QRLSR).

Belongs to the IPP transferase family. Monomer. The cofactor is Mg(2+).

The catalysed reaction is adenosine(37) in tRNA + dimethylallyl diphosphate = N(6)-dimethylallyladenosine(37) in tRNA + diphosphate. Functionally, catalyzes the transfer of a dimethylallyl group onto the adenine at position 37 in tRNAs that read codons beginning with uridine, leading to the formation of N6-(dimethylallyl)adenosine (i(6)A). The sequence is that of tRNA dimethylallyltransferase from Pseudomonas fluorescens (strain Pf0-1).